Reading from the N-terminus, the 398-residue chain is Phosphoglycerate kinase (398 aa).

Substrate is bound by residues 21–23, R36, 59–62, R119, and R157; these read DFN and HLGR. ATP is bound by residues K208, G296, E327, and 354–357; that span reads GGDS.

The protein belongs to the phosphoglycerate kinase family. In terms of assembly, monomer.

The protein resides in the cytoplasm. It carries out the reaction (2R)-3-phosphoglycerate + ATP = (2R)-3-phospho-glyceroyl phosphate + ADP. Its pathway is carbohydrate degradation; glycolysis; pyruvate from D-glyceraldehyde 3-phosphate: step 2/5. The chain is Phosphoglycerate kinase from Streptococcus sanguinis (strain SK36).